The chain runs to 318 residues: Aquaporin-1 (318 aa).

Residues methionine 1–proline 16 show a composition bias toward polar residues. The disordered stretch occupies residues methionine 1–glycine 27. Residues methionine 1–asparagine 36 lie on the Cytoplasmic side of the membrane. The chain crosses the membrane as a helical span at residues alanine 37–isoleucine 57. Topologically, residues glycine 58 to proline 77 are extracellular. Residues phenylalanine 78–phenylalanine 98 form a helical membrane-spanning segment. The Cytoplasmic portion of the chain corresponds to tyrosine 99 to proline 108. The short motif at asparagine 107–alanine 109 is the NPA 1 element. Residues alanine 109–isoleucine 129 traverse the membrane as a helical segment. At proline 130–glutamine 165 the chain is on the extracellular side. N-linked (GlcNAc...) asparagine glycosylation is present at asparagine 159. Residues glycine 166–valine 186 form a helical membrane-spanning segment. At glutamate 187 to histidine 193 the chain is on the cytoplasmic side. The chain crosses the membrane as a helical span at residues leucine 194–threonine 214. Topologically, residues glycine 215–aspartate 236 are extracellular. An NPA 2 motif is present at residues asparagine 219 to alanine 221. The chain crosses the membrane as a helical span at residues tryptophan 237 to phenylalanine 257. Residues lysine 258 to valine 318 are Cytoplasmic-facing. Residues glycine 268 to valine 318 are disordered. Residues histidine 285–valine 305 show a composition bias toward basic and acidic residues.

It belongs to the MIP/aquaporin (TC 1.A.8) family.

It is found in the nucleus membrane. The catalysed reaction is H2O(in) = H2O(out). Probable water channel involved in responses to changes in environmental conditions and conidiation. Involved in responses to hyperosmotic conditions, oxidative stress and cell wall destabilization. Also required for proper transcriptional activation of genes involved in aurofusarin biosynthesis. Not involved in pathogenicity, but negatively regulates deoxynivalenol (DON) production. The polypeptide is Aquaporin-1 (Gibberella zeae (strain ATCC MYA-4620 / CBS 123657 / FGSC 9075 / NRRL 31084 / PH-1) (Wheat head blight fungus)).